A 1501-amino-acid polypeptide reads, in one-letter code: 1-phosphatidylinositol 4,5-bisphosphate phosphodiesterase eta-2 (1501 aa).

The disordered stretch occupies residues 28 to 47 (RGFSGLQGGRRRGRGEKGIP). Positions 75–229 (MPGPQPSAAS…WVTGLRYLMA (155 aa)) are necessary for plasma membrane localization. One can recognise a PH domain in the interval 121-229 (SAMQEGTQMV…WVTGLRYLMA (109 aa)). EF-hand domains are found at residues 243-278 (TRDQWLKQTFDEADKNGDGSLSISEVLQLLHKLNVN) and 279-315 (LPRQRVKQMFREADTDDHQGTLGFEEFCAFYKMMSTR). 5 residues coordinate Ca(2+): Asp-256, Asn-258, Asp-260, Ser-262, and Glu-267. Residues 400 to 545 (QDMTQPLSHY…LKGKILVKGK (146 aa)) enclose the PI-PLC X-box domain. His-415 is an active-site residue. Ca(2+) contacts are provided by Asn-416, Glu-445, and Asp-447. His-459 is a catalytic residue. Residue Glu-494 participates in Ca(2+) binding. Residues Lys-543 and Lys-545 each contribute to the substrate site. 2 disordered regions span residues 551–570 (ISEDAEEGEVSDEDSADEME) and 609–700 (DPND…QKKT). The segment covering 553-570 (EDAEEGEVSDEDSADEME) has biased composition (acidic residues). Residues Ser-561 and Ser-565 each carry the phosphoserine modification. Residues 626–638 (RKAEAKKGQSKVE) are compositionally biased toward basic and acidic residues. The segment covering 662–673 (SKRKKKGSKIKK) has biased composition (basic residues). A phosphoserine mark is found at Ser-676 and Ser-686. A PI-PLC Y-box domain is found at 707-821 (LSDLVKYTKS…GYVLKPQCMC (115 aa)). The substrate site is built by Ser-734 and Arg-761. Positions 821 to 950 (CQGVFNPNSE…PGYRHVYLEG (130 aa)) constitute a C2 domain. Positions 865, 867, 891, 920, 921, and 922 each coordinate Ca(2+). Disordered stretches follow at residues 986 to 1073 (GSLD…RLFP), 1089 to 1238 (EEPA…SSND), 1273 to 1305 (SAARPDLPPVTKSKSNPNLRVAGGLPTAPDELQ), and 1398 to 1469 (GDIT…GACS). Low complexity predominate over residues 1089-1107 (EEPALGPGLPLQAAAPTGP). Composition is skewed to basic and acidic residues over residues 1142 to 1151 (GGRENEEPPL) and 1215 to 1227 (LWQRLEPGSHRDS). Low complexity predominate over residues 1421 to 1439 (RRSSSRSQSRVRAIASRAR). Residues 1440–1463 (QAQERQQRLRGQDSRGPPEEERGT) are compositionally biased toward basic and acidic residues.

It depends on Ca(2+) as a cofactor. Specifically detected in the brain, with higher level in cerebral cortex, olfactory bulb and hippocampus (at protein level). Expressed in the pyramidal cells of the hippocampus, but also in eye and lung.

Its subcellular location is the cytoplasm. The protein resides in the cell membrane. The catalysed reaction is a 1,2-diacyl-sn-glycero-3-phospho-(1D-myo-inositol-4,5-bisphosphate) + H2O = 1D-myo-inositol 1,4,5-trisphosphate + a 1,2-diacyl-sn-glycerol + H(+). Activity is stimulated by GNB1:GNG2. Functionally, the production of the second messenger molecules diacylglycerol (DAG) and inositol 1,4,5-trisphosphate (IP3) is mediated by activated phosphatidylinositol-specific phospholipase C enzymes. This phospholipase activity is very sensitive to calcium. May be important for formation and maintenance of the neuronal network in the postnatal brain. This chain is 1-phosphatidylinositol 4,5-bisphosphate phosphodiesterase eta-2, found in Mus musculus (Mouse).